The sequence spans 192 residues: Thymidylate kinase (192 aa).

7-14 (GIDCVGKS) provides a ligand contact to ATP.

This sequence belongs to the thymidylate kinase family.

It carries out the reaction dTMP + ATP = dTDP + ADP. Functionally, phosphorylation of dTMP to form dTDP in both de novo and salvage pathways of dTTP synthesis. This chain is Thymidylate kinase, found in Campylobacter jejuni subsp. jejuni serotype O:6 (strain 81116 / NCTC 11828).